A 171-amino-acid polypeptide reads, in one-letter code: NADH-quinone oxidoreductase subunit I 1 (171 aa).

2 consecutive 4Fe-4S ferredoxin-type domains span residues 39–71 (IVLT…LTKA) and 81–110 (EHFR…LTPD). 8 residues coordinate [4Fe-4S] cluster: C51, C54, C57, C61, C90, C93, C96, and C100.

This sequence belongs to the complex I 23 kDa subunit family. In terms of assembly, NDH-1 is composed of 14 different subunits. Subunits NuoA, H, J, K, L, M, N constitute the membrane sector of the complex. It depends on [4Fe-4S] cluster as a cofactor.

The protein localises to the cell inner membrane. The enzyme catalyses a quinone + NADH + 5 H(+)(in) = a quinol + NAD(+) + 4 H(+)(out). Its function is as follows. NDH-1 shuttles electrons from NADH, via FMN and iron-sulfur (Fe-S) centers, to quinones in the respiratory chain. The immediate electron acceptor for the enzyme in this species is believed to be ubiquinone. Couples the redox reaction to proton translocation (for every two electrons transferred, four hydrogen ions are translocated across the cytoplasmic membrane), and thus conserves the redox energy in a proton gradient. The sequence is that of NADH-quinone oxidoreductase subunit I 1 from Rhodopseudomonas palustris (strain BisB5).